A 374-amino-acid polypeptide reads, in one-letter code: UPF0496 protein At3g28270 (374 aa).

The stretch at 171 to 210 forms a coiled coil; it reads KVLTTQFERIKKQQESLLEEVSETRKKIQDEISNLEKKTL. 2 consecutive transmembrane segments (helical) span residues 214–234 and 235–255; these read VVFGAAFAIVAVASIALIATG and VGAAAGFGALAAPLLAAGWAG. A coiled-coil region spans residues 256–321; sequence VYTTLDKKKD…MLKLVDNAID (66 aa).

This sequence belongs to the UPF0496 family.

The protein resides in the membrane. The polypeptide is UPF0496 protein At3g28270 (Arabidopsis thaliana (Mouse-ear cress)).